A 303-amino-acid polypeptide reads, in one-letter code: Protoheme IX farnesyltransferase (303 aa).

Helical transmembrane passes span 25-45 (MGLV…AVVM), 54-74 (IPQI…ACAL), 104-124 (LLLL…LLNI), 125-145 (PSGV…SIWS), 151-171 (WNTV…WVAI), 179-199 (AIAL…ALAI), 227-247 (FIWL…GVVF), 248-268 (VVLA…TFKK), and 280-300 (FIYS…VSLL).

This sequence belongs to the UbiA prenyltransferase family. Protoheme IX farnesyltransferase subfamily. In terms of assembly, interacts with CtaA.

Its subcellular location is the cell membrane. The enzyme catalyses heme b + (2E,6E)-farnesyl diphosphate + H2O = Fe(II)-heme o + diphosphate. Its pathway is porphyrin-containing compound metabolism; heme O biosynthesis; heme O from protoheme: step 1/1. Converts heme B (protoheme IX) to heme O by substitution of the vinyl group on carbon 2 of heme B porphyrin ring with a hydroxyethyl farnesyl side group. In Staphylococcus aureus (strain Mu3 / ATCC 700698), this protein is Protoheme IX farnesyltransferase.